The primary structure comprises 645 residues: DNA mismatch repair protein MutL (645 aa).

Belongs to the DNA mismatch repair MutL/HexB family.

Functionally, this protein is involved in the repair of mismatches in DNA. It is required for dam-dependent methyl-directed DNA mismatch repair. May act as a 'molecular matchmaker', a protein that promotes the formation of a stable complex between two or more DNA-binding proteins in an ATP-dependent manner without itself being part of a final effector complex. In Pediococcus pentosaceus (strain ATCC 25745 / CCUG 21536 / LMG 10740 / 183-1w), this protein is DNA mismatch repair protein MutL.